We begin with the raw amino-acid sequence, 477 residues long: Adenylyl cyclase-associated protein 2 (477 aa).

Ala-2 is modified (N-acetylalanine). 2 disordered regions span residues 224-261 and 274-323; these read VLSSGPGLPPPPPPPPPPGPPPLLENEGKKEESSPSRS and TKGL…KHAP. A compositionally biased stretch (pro residues) spans 230–246; the sequence is GLPPPPPPPPPPGPPPL. 2 positions are modified to phosphoserine: Ser-301 and Ser-309. Over residues 301–320 the composition is skewed to low complexity; it reads SPTKSHTPSPTSPKSYPSQK. The C-CAP/cofactor C-like domain occupies 317–455; the sequence is PSQKHAPVLE…QDGDYREFPI (139 aa).

The protein belongs to the CAP family.

Its subcellular location is the cell membrane. In terms of biological role, involved in the regulation of actin polymerization. The protein is Adenylyl cyclase-associated protein 2 (CAP2) of Pongo abelii (Sumatran orangutan).